A 327-amino-acid chain; its full sequence is 2-methoxy-6-polyprenyl-1,4-benzoquinol methylase, mitochondrial (327 aa).

Residues 1-49 (MAAPRCCVLWRVCGRGWWRATGHCRLPGCHRSWPWATLGTRSLSQEKRA) constitute a mitochondrion transit peptide. Residues threonine 117, aspartate 171, and 199-200 (DA) contribute to the S-adenosyl-L-methionine site.

This sequence belongs to the class I-like SAM-binding methyltransferase superfamily. MenG/UbiE family. In terms of assembly, component of a multi-subunit COQ enzyme complex, composed of at least COQ3, COQ4, COQ5, COQ6, COQ7 and COQ9. Interacts with PYURF; the interaction is direct, stabilizes COQ5 protein and associates PYURF with COQ enzyme complex.

The protein resides in the mitochondrion inner membrane. The enzyme catalyses 2-methoxy-6-(all-trans-decaprenyl)benzene-1,4-diol + S-adenosyl-L-methionine = 5-methoxy-2-methyl-3-(all-trans-decaprenyl)benzene-1,4-diol + S-adenosyl-L-homocysteine + H(+). It participates in cofactor biosynthesis; ubiquinone biosynthesis. Functionally, methyltransferase required for the conversion of 2-decaprenyl-6-methoxy-1,4-benzoquinol (DDMQH2) to 2-decaprenyl-3-methyl-6-methoxy-1,4-benzoquinol (DMQH2). The chain is 2-methoxy-6-polyprenyl-1,4-benzoquinol methylase, mitochondrial from Mus musculus (Mouse).